Consider the following 209-residue polypeptide: MNSIKNHLMCEEIHKRFHLHPKVREAMESIEREVFVPAPFKHFAYTLNALSMQAQQYISSPLTVAKMTQYLEIDHVDSVLEIGCGSGYQAAVLSQIFRRVFSVERIESLYLEARLRLKTLGLDNVHVKFADGNKGWEQYAPYDRILFSACAKNIPQALIDQLEEGGILVAPIQENNEQVIKRFVKQNNALRVQKVLEKCSFVPVVDGVQ.

Ser59 is a catalytic residue.

The protein belongs to the methyltransferase superfamily. L-isoaspartyl/D-aspartyl protein methyltransferase family.

Its subcellular location is the cytoplasm. The enzyme catalyses [protein]-L-isoaspartate + S-adenosyl-L-methionine = [protein]-L-isoaspartate alpha-methyl ester + S-adenosyl-L-homocysteine. Functionally, catalyzes the methyl esterification of L-isoaspartyl residues in peptides and proteins that result from spontaneous decomposition of normal L-aspartyl and L-asparaginyl residues. It plays a role in the repair and/or degradation of damaged proteins. The chain is Protein-L-isoaspartate O-methyltransferase from Helicobacter pylori (strain P12).